Reading from the N-terminus, the 325-residue chain is Siroheme decarboxylase NirDL subunit (325 aa).

The protein belongs to the Ahb/Nir family. Forms a complex composed of NirDL, NirG and NirH. All proteins are required for the total conversion of siroheme to didecarboxysiroheme.

The catalysed reaction is siroheme + 2 H(+) = 12,18-didecarboxysiroheme + 2 CO2. It functions in the pathway porphyrin-containing compound metabolism. Its function is as follows. Involved in heme d1 biosynthesis. Catalyzes the decarboxylation of siroheme into didecarboxysiroheme. This chain is Siroheme decarboxylase NirDL subunit, found in Paracoccus denitrificans (strain Pd 1222).